A 442-amino-acid chain; its full sequence is Putative toxin YopC (442 aa).

It in the C-terminal section; belongs to the MbcT/ParT/Res family. Forms a complex with cognate antitoxin YopB.

In terms of biological role, may be the toxic component of a type II toxin-antitoxin (TA) system. Neutralized by its cognate antitoxin YopB. In Bacillus subtilis (strain 168), this protein is Putative toxin YopC (yopC).